The sequence spans 450 residues: Equilibrative nucleotide transporter 1 (450 aa).

11 helical membrane passes run 63–83 (FAYIIYFTLGVGFLLPWNAFI), 101–121 (IFAVIYMLVALVCLFVIVVFY), 133–153 (LGLLLFVIALLVVPVLDLVYV), 168–188 (AAVALSGLGDALMQGGLIGVA), 196–216 (MQAVVAGTAGSGVLVSLLRIL), 234–254 (LYFAVGIVVMVICAVFYNVAH), 300–320 (HGFGIVLLYMVTLSIFPGYIT), 334–354 (ILLIAAYNVFDLVGKCLTAVF), 361–381 (IAVGGSIARLLFYPLFWGCLH), 394–414 (ILTCLLGLTNGYLTSVLMILA), and 430–450 (TVMFLVVGLASGSVIAWFWVI).

It belongs to the SLC29A/ENT transporter (TC 2.A.57) family. In young seedlings, expressed in root elongation zone, root cortex, root-hair, at the transition to the shoot and cotyledons. Expressed in hydathodes of fully developed leaves and pollen.

It localises to the vacuole membrane. In terms of biological role, nucleoside transporter involved in adenosine transport and required for nucleotide metabolism which influences growth and pollen germination. Has high affinity for adenosine when expressed in a heterologous system (yeast). This Arabidopsis thaliana (Mouse-ear cress) protein is Equilibrative nucleotide transporter 1 (ENT1).